We begin with the raw amino-acid sequence, 181 residues long: Protein canopy homolog 1 (181 aa).

The signal sequence occupies residues 1–21; that stretch reads MAILLHFGVLITAFLSSHVEG. The 153-residue stretch at 25 to 177 folds into the Saposin B-type domain; sequence PILYCGACRA…EETGLCKEYL (153 aa). Cystine bridges form between Cys29/Cys173, Cys32/Cys166, and Cys87/Cys139. The Prevents secretion from ER motif lies at 178–181; it reads HNEL.

This sequence belongs to the canopy family.

It localises to the endoplasmic reticulum. In terms of biological role, plays an role in early embryonic development. The protein is Protein canopy homolog 1 (cnpy1) of Xenopus laevis (African clawed frog).